A 571-amino-acid chain; its full sequence is Proline--tRNA ligase (571 aa).

The protein belongs to the class-II aminoacyl-tRNA synthetase family. ProS type 1 subfamily. As to quaternary structure, homodimer.

It is found in the cytoplasm. It catalyses the reaction tRNA(Pro) + L-proline + ATP = L-prolyl-tRNA(Pro) + AMP + diphosphate. Catalyzes the attachment of proline to tRNA(Pro) in a two-step reaction: proline is first activated by ATP to form Pro-AMP and then transferred to the acceptor end of tRNA(Pro). As ProRS can inadvertently accommodate and process non-cognate amino acids such as alanine and cysteine, to avoid such errors it has two additional distinct editing activities against alanine. One activity is designated as 'pretransfer' editing and involves the tRNA(Pro)-independent hydrolysis of activated Ala-AMP. The other activity is designated 'posttransfer' editing and involves deacylation of mischarged Ala-tRNA(Pro). The misacylated Cys-tRNA(Pro) is not edited by ProRS. The sequence is that of Proline--tRNA ligase from Pediococcus pentosaceus (strain ATCC 25745 / CCUG 21536 / LMG 10740 / 183-1w).